The chain runs to 69 residues: Large ribosomal subunit protein bL31 (69 aa).

It belongs to the bacterial ribosomal protein bL31 family. Type A subfamily. Part of the 50S ribosomal subunit.

Functionally, binds the 23S rRNA. The polypeptide is Large ribosomal subunit protein bL31 (Mycoplasmopsis pulmonis (strain UAB CTIP) (Mycoplasma pulmonis)).